The primary structure comprises 264 residues: Glyceraldehyde-3-phosphate dehydrogenase (264 aa).

NAD(+)-binding residues include Arg45 and Thr93. D-glyceraldehyde 3-phosphate is bound by residues 123 to 125 (SCT) and Thr154. The active-site Nucleophile is Cys124. Asn155 serves as a coordination point for NAD(+). Residues Arg169, 182-183 (TG), and Arg205 each bind D-glyceraldehyde 3-phosphate. The interval 245–264 (GILGYTEDPXVSSDXKGNSH) is disordered.

This sequence belongs to the glyceraldehyde-3-phosphate dehydrogenase family. In terms of assembly, homotetramer.

Its subcellular location is the cytoplasm. It carries out the reaction D-glyceraldehyde 3-phosphate + phosphate + NAD(+) = (2R)-3-phospho-glyceroyl phosphate + NADH + H(+). Its pathway is carbohydrate degradation; glycolysis; pyruvate from D-glyceraldehyde 3-phosphate: step 1/5. In terms of biological role, catalyzes the oxidative phosphorylation of glyceraldehyde 3-phosphate (G3P) to 1,3-bisphosphoglycerate (BPG) using the cofactor NAD. The first reaction step involves the formation of a hemiacetal intermediate between G3P and a cysteine residue, and this hemiacetal intermediate is then oxidized to a thioester, with concomitant reduction of NAD to NADH. The reduced NADH is then exchanged with the second NAD, and the thioester is attacked by a nucleophilic inorganic phosphate to produce BPG. The polypeptide is Glyceraldehyde-3-phosphate dehydrogenase (gap) (Borrelia hermsii).